The chain runs to 380 residues: Cytochrome b (380 aa).

Transmembrane regions (helical) follow at residues 34-54 (FGSL…LLAM), 78-99 (WLIR…YLHI), 114-134 (WNTG…GYVL), and 179-199 (FFAL…IHLT). Heme b contacts are provided by His84 and His98. Residues His183 and His197 each contribute to the heme b site. His202 provides a ligand contact to a ubiquinone. 4 helical membrane-spanning segments follow: residues 227-247 (IKDI…ALFS), 289-309 (LGGV…PFLH), 321-341 (FSQL…WVGS), and 348-368 (FIII…ILFP).

The protein belongs to the cytochrome b family. In terms of assembly, the cytochrome bc1 complex contains 11 subunits: 3 respiratory subunits (MT-CYB, CYC1 and UQCRFS1), 2 core proteins (UQCRC1 and UQCRC2) and 6 low-molecular weight proteins (UQCRH/QCR6, UQCRB/QCR7, UQCRQ/QCR8, UQCR10/QCR9, UQCR11/QCR10 and a cleavage product of UQCRFS1). This cytochrome bc1 complex then forms a dimer. Heme b is required as a cofactor.

It is found in the mitochondrion inner membrane. In terms of biological role, component of the ubiquinol-cytochrome c reductase complex (complex III or cytochrome b-c1 complex) that is part of the mitochondrial respiratory chain. The b-c1 complex mediates electron transfer from ubiquinol to cytochrome c. Contributes to the generation of a proton gradient across the mitochondrial membrane that is then used for ATP synthesis. This chain is Cytochrome b (MT-CYB), found in Numida meleagris (Helmeted guineafowl).